The chain runs to 382 residues: ADP,ATP carrier protein, mitochondrial (382 aa).

Residues 1-71 constitute a mitochondrion transit peptide; the sequence is MAEQANQPTV…PMMSSSPIFA (71 aa). Solcar repeat units lie at residues 80–173, 185–277, and 285–371; these read KNFM…FKRL, KWFG…LKPV, and DNFF…LQIL. Transmembrane regions (helical) follow at residues 82–109, 150–174, 183–203, 253–274, and 288–308; these read FMID…VKLL, TANV…KRLF, YWKW…SSLF, FNIS…YDSL, and FASF…SYPI. 2 residues coordinate ADP: R155 and K167. Residue R312 participates in ADP binding. The interval 312–317 is important for transport activity; it reads RRRMMM. A Nucleotide carrier signature motif motif is present at residues 312-317; it reads RRRMMM. A helical membrane pass occupies residues 348 to 368; the sequence is AGANILRAIAGAGVLSGYDQL.

It belongs to the mitochondrial carrier (TC 2.A.29) family. As to quaternary structure, monomer.

It is found in the mitochondrion inner membrane. It catalyses the reaction ADP(in) + ATP(out) = ADP(out) + ATP(in). Its activity is regulated as follows. The matrix-open state (m-state) is inhibited by the membrane-permeable bongkrekic acid (BKA). The cytoplasmic-open state (c-state) is inhibited by the membrane-impermeable toxic inhibitor carboxyatractyloside (CATR). Its function is as follows. ADP:ATP antiporter that mediates import of ADP into the mitochondrial matrix for ATP synthesis, and export of ATP out to fuel the cell. Cycles between the cytoplasmic-open state (c-state) and the matrix-open state (m-state): operates by the alternating access mechanism with a single substrate-binding site intermittently exposed to either the cytosolic (c-state) or matrix (m-state) side of the inner mitochondrial membrane. This Oryza sativa subsp. japonica (Rice) protein is ADP,ATP carrier protein, mitochondrial.